A 189-amino-acid chain; its full sequence is Large ribosomal subunit protein bL12c (189 aa).

Disordered regions lie at residues 1-30 (MAAT…HPQP) and 165-189 (EGVS…VSIV). A chloroplast-targeting transit peptide spans 1 to 56 (MAATTTMATLNLPSLTSHPNSSTFPKHPQPLQFPFRTTTNPISLSSTRTTRLRPIA). Positions 11–24 (NLPSLTSHPNSSTF) are enriched in polar residues. The segment covering 165 to 183 (EGVSKDDAEDAKKQLEDAG) has biased composition (basic and acidic residues).

In terms of assembly, component of the chloroplast large ribosomal subunit (LSU). Mature 70S chloroplast ribosomes of higher plants consist of a small (30S) and a large (50S) subunit. The 30S small subunit contains 1 molecule of ribosomal RNA (16S rRNA) and 24 different proteins. The 50S large subunit contains 3 rRNA molecules (23S, 5S and 4.5S rRNA) and 33 different proteins.

It localises to the plastid. The protein resides in the chloroplast. Functionally, component of the chloroplast ribosome (chloro-ribosome), a dedicated translation machinery responsible for the synthesis of chloroplast genome-encoded proteins, including proteins of the transcription and translation machinery and components of the photosynthetic apparatus. This chain is Large ribosomal subunit protein bL12c (RPL12), found in Spinacia oleracea (Spinach).